We begin with the raw amino-acid sequence, 422 residues long: Serine hydroxymethyltransferase 2 (422 aa).

(6S)-5,6,7,8-tetrahydrofolate contacts are provided by residues Leu121 and 125-127 (GHL). Lys230 bears the N6-(pyridoxal phosphate)lysine mark.

This sequence belongs to the SHMT family. Homodimer. Requires pyridoxal 5'-phosphate as cofactor.

Its subcellular location is the cytoplasm. It carries out the reaction (6R)-5,10-methylene-5,6,7,8-tetrahydrofolate + glycine + H2O = (6S)-5,6,7,8-tetrahydrofolate + L-serine. The protein operates within one-carbon metabolism; tetrahydrofolate interconversion. It participates in amino-acid biosynthesis; glycine biosynthesis; glycine from L-serine: step 1/1. Its function is as follows. Catalyzes the reversible interconversion of serine and glycine with tetrahydrofolate (THF) serving as the one-carbon carrier. This reaction serves as the major source of one-carbon groups required for the biosynthesis of purines, thymidylate, methionine, and other important biomolecules. Also exhibits THF-independent aldolase activity toward beta-hydroxyamino acids, producing glycine and aldehydes, via a retro-aldol mechanism. This Agrobacterium fabrum (strain C58 / ATCC 33970) (Agrobacterium tumefaciens (strain C58)) protein is Serine hydroxymethyltransferase 2.